The primary structure comprises 510 residues: Bifunctional purine biosynthesis protein PurH (510 aa).

Residues methionine 1–threonine 142 enclose the MGS-like domain.

The protein belongs to the PurH family.

The enzyme catalyses (6R)-10-formyltetrahydrofolate + 5-amino-1-(5-phospho-beta-D-ribosyl)imidazole-4-carboxamide = 5-formamido-1-(5-phospho-D-ribosyl)imidazole-4-carboxamide + (6S)-5,6,7,8-tetrahydrofolate. The catalysed reaction is IMP + H2O = 5-formamido-1-(5-phospho-D-ribosyl)imidazole-4-carboxamide. It functions in the pathway purine metabolism; IMP biosynthesis via de novo pathway; 5-formamido-1-(5-phospho-D-ribosyl)imidazole-4-carboxamide from 5-amino-1-(5-phospho-D-ribosyl)imidazole-4-carboxamide (10-formyl THF route): step 1/1. Its pathway is purine metabolism; IMP biosynthesis via de novo pathway; IMP from 5-formamido-1-(5-phospho-D-ribosyl)imidazole-4-carboxamide: step 1/1. The protein is Bifunctional purine biosynthesis protein PurH of Campylobacter concisus (strain 13826).